The primary structure comprises 366 residues: Peptide chain release factor 1 (366 aa).

An N5-methylglutamine modification is found at Gln239.

It belongs to the prokaryotic/mitochondrial release factor family. Post-translationally, methylated by PrmC. Methylation increases the termination efficiency of RF1.

The protein localises to the cytoplasm. Its function is as follows. Peptide chain release factor 1 directs the termination of translation in response to the peptide chain termination codons UAG and UAA. The protein is Peptide chain release factor 1 of Baumannia cicadellinicola subsp. Homalodisca coagulata.